The following is a 381-amino-acid chain: Tumor necrosis factor receptor superfamily member 10B (381 aa).

Positions 1–52 are cleaved as a signal peptide; sequence MEPPGPSTPTASAAARADHYTPGLRPLPKRRLLYSFALLLAVLQAVFVPVTA. TNFR-Cys repeat units lie at residues 26–86, 87–129, and 130–169; these read PLPK…GNCK, PCRE…NTVC, and RCKPGTFEDKDSPEICQSCSNCTDGEEELTSCTPRENRKC. The Extracellular segment spans residues 53-180; sequence NPAHNRPAGL…SKTAWASWHK (128 aa). Intrachain disulfides connect cysteine 74–cysteine 85, cysteine 88–cysteine 105, cysteine 108–cysteine 121, cysteine 111–cysteine 129, cysteine 131–cysteine 145, cysteine 148–cysteine 161, and cysteine 151–cysteine 169. A helical transmembrane segment spans residues 181–201; sequence LGLWIGLLVPVVLLIGALLVW. The Cytoplasmic segment spans residues 202 to 381; that stretch reads KTGAWRQWLL…ETGPGGSQCV (180 aa). Positions 228–260 are disordered; sequence HSSLLDRQTSSTTNDSNHNTEPGKTQKTGKKLL. Residues 236-247 show a composition bias toward low complexity; it reads TSSTTNDSNHNT. The Death domain maps to 273–356; the sequence is KFIFEYCSDI…DAMEKIEDYA (84 aa). The (Microbial infection) N-beta-linked (GlcNAc) arginine glycan is linked to arginine 293.

Monomer. Can interact with TRADD and RIPK1. Three TNFRSF10B molecules interact with the TNFSF10 homotrimer. In the absence of stimulation, interacts with BIRC2, DDX3X and GSK3B. The interaction with BIRC2 and DDX3X is further enhanced upon receptor stimulation and accompanied by DDX3X and BIRC2 cleavage. In terms of processing, (Microbial infection) Glycosylated at Arg-293 by S.typhimurium protein Ssek3. As to expression, highly expressed in heart, lung and kidney.

It localises to the membrane. Receptor for the cytotoxic ligand TNFSF10/TRAIL. The adapter molecule FADD recruits caspase-8 to the activated receptor. The resulting death-inducing signaling complex (DISC) performs caspase-8 proteolytic activation which initiates the subsequent cascade of caspases (aspartate-specific cysteine proteases) mediating apoptosis. Promotes the activation of NF-kappa-B. Essential for ER stress-induced apoptosis. This Mus musculus (Mouse) protein is Tumor necrosis factor receptor superfamily member 10B (Tnfrsf10b).